Reading from the N-terminus, the 576-residue chain is Probable metalloreductase AIM14 (576 aa).

Transmembrane regions (helical) follow at residues 21–41 (IKYG…LALL), 70–90 (AIHL…HYSL), 101–118 (LGRL…LTLR), 142–162 (IITV…AIDD), 177–197 (FVGF…IGPM), 204–224 (LFYI…PIHS), and 230–250 (FPFL…RIVF). The Ferric oxidoreductase domain occupies 101 to 219 (LGRLSYALIP…NLVNVAFILL (119 aa)). The FAD-binding FR-type domain maps to 250–388 (FAKSLMILNK…GGSGISFALP (139 aa)). Residues 480-505 (ISNFNSENADSNDNTPETSHSPTKEN) show a composition bias toward polar residues. The interval 480 to 507 (ISNFNSENADSNDNTPETSHSPTKENGS) is disordered.

The protein belongs to the ferric reductase (FRE) family. AIM14 subfamily. In terms of assembly, interacts with ribosomes.

Its subcellular location is the membrane. Its function is as follows. Probable cell surface metalloreductase. May be involved in iron or copper homeostasis. This chain is Probable metalloreductase AIM14 (AIM14), found in Saccharomyces cerevisiae (strain Lalvin EC1118 / Prise de mousse) (Baker's yeast).